The chain runs to 862 residues: Ecdysone-induced protein 78C (862 aa).

4 disordered regions span residues 28–83, 97–138, 173–210, and 230–353; these read SSEQ…EEAL, LHFF…KQHH, ASLSPQQQQQRQHTHQQQQQQQQQQQHPGQQQHQLNCT, and ASNH…NNNN. Residues 37-46 show a composition bias toward basic and acidic residues; the sequence is KQEDLIKDFT. Over residues 47–82 the composition is skewed to acidic residues; sequence RDEEEQPSEEEAEEEDNEEDEEEEGEEEEEDEDEEA. Residues 105-119 show a composition bias toward polar residues; that stretch reads DSSTQGAYSEANSLE. 4 stretches are compositionally biased toward low complexity: residues 173-206, 230-291, 308-335, and 342-353; these read ASLSPQQQQQRQHTHQQQQQQQQQQQHPGQQQHQ, ASNH…NNSV, QQQQPLPTTQLQQQQQHQQQLQHPQQQQ, and SSSSNGSSNNNN. A DNA-binding region (nuclear receptor) is located at residues 360–435; sequence FVPCKVCGDK…AGMSRDSVRY (76 aa). 2 consecutive NR C4-type zinc fingers follow at residues 363-383 and 399-418; these read CKVCGDKASGYHYGVTSCEGC and CLRDGKCLVIRLNRNRCQYC. The segment at 444 to 557 is disordered; sequence ELNGAAASSA…NNNSSSGNAS (114 aa). Positions 447 to 460 are enriched in low complexity; that stretch reads GAAASSAAAGAPAS. A compositionally biased stretch (polar residues) spans 463 to 472; that stretch reads VDDSTSSTLH. Residues 475-508 show a composition bias toward low complexity; the sequence is HLQQQQQQHLLQQQQQQQHQPQLQQHHQLQQQPH. Positions 516–533 are enriched in polar residues; sequence TPSTPQTPQMCSIASSPS. The segment covering 539–555 has biased composition (low complexity); it reads NSANNNNNNNNNSSSGN. Positions 626–855 constitute an NR LBD domain; it reads YTEELTRELM…PPLFAEIFDI (230 aa).

Belongs to the nuclear hormone receptor family. NR1 subfamily.

It is found in the nucleus. Its function is as follows. Induces the early late puff 78C which triggers puparium formation and development. This chain is Ecdysone-induced protein 78C (Eip78C), found in Drosophila melanogaster (Fruit fly).